The following is a 206-amino-acid chain: Ribosomal RNA small subunit methyltransferase G (206 aa).

S-adenosyl-L-methionine-binding positions include Gly73, Leu78, 124–125, and Arg139; that span reads VE.

This sequence belongs to the methyltransferase superfamily. RNA methyltransferase RsmG family.

It is found in the cytoplasm. It carries out the reaction guanosine(527) in 16S rRNA + S-adenosyl-L-methionine = N(7)-methylguanosine(527) in 16S rRNA + S-adenosyl-L-homocysteine. Its function is as follows. Specifically methylates the N7 position of guanine in position 527 of 16S rRNA. In Photobacterium profundum (strain SS9), this protein is Ribosomal RNA small subunit methyltransferase G.